Reading from the N-terminus, the 350-residue chain is Heme A synthase (350 aa).

8 helical membrane-spanning segments follow: residues 14–34 (VAIW…IGGF), 95–115 (YVHR…FIYF), 125–145 (VVIK…AGWY), 162–182 (LALH…QFFD), 202–222 (VGII…VAGL), 260–280 (VQFI…ILTV), 296–316 (IIQI…AIAI), and 317–337 (AHQV…CYLR). Heme is bound at residue histidine 264. Heme is bound at residue histidine 318.

Belongs to the COX15/CtaA family. Type 2 subfamily. Interacts with CtaB. It depends on heme b as a cofactor.

It is found in the cell membrane. The enzyme catalyses Fe(II)-heme o + 2 A + H2O = Fe(II)-heme a + 2 AH2. It participates in porphyrin-containing compound metabolism; heme A biosynthesis; heme A from heme O: step 1/1. In terms of biological role, catalyzes the conversion of heme O to heme A by two successive hydroxylations of the methyl group at C8. The first hydroxylation forms heme I, the second hydroxylation results in an unstable dihydroxymethyl group, which spontaneously dehydrates, resulting in the formyl group of heme A. This Wolbachia pipientis wMel protein is Heme A synthase.